Reading from the N-terminus, the 476-residue chain is WASH complex subunit 1 (476 aa).

The segment at 1–54 is required for WASH complex assembly; the sequence is MTTVAQKHFLEGQTYSVPLIQPDLRREEAVQQVADALQYLQKVSGDIFNRISQR. 2 disordered regions span residues 273-412 and 427-476; these read SAPS…QGGD and GISG…DWES. A compositionally biased stretch (polar residues) spans 284-296; that stretch reads TFSTESVEPSQAD. The segment covering 302–333 has biased composition (pro residues); that stretch reads LLPPPPPPPPPPPPVMPTTVPPPPPLPQPTAP. The segment at 354–476 is VCA; it reads QGAPKEVVNP…GEEDEDDWES (123 aa). One can recognise a WH2 domain in the interval 366–388; the sequence is GRASLLESIRQAGGIGKANLRSV. Residues 387–403 show a composition bias toward basic and acidic residues; that stretch reads SVKERKLEKKKQKEQEQ. Residues 467–476 are compositionally biased toward acidic residues; that stretch reads GEEDEDDWES.

It belongs to the WASH1 family. Component of the WASH complex.

It localises to the early endosome membrane. The protein resides in the recycling endosome membrane. Its function is as follows. Acts as a nucleation-promoting factor at the surface of endosomes, where it recruits and activates the Arp2/3 complex to induce actin polymerization, playing a key role in the fission of tubules that serve as transport intermediates during endosome sorting. This is WASH complex subunit 1 from Gallus gallus (Chicken).